The following is a 126-amino-acid chain: Aspartate 1-decarboxylase (126 aa).

Ser-25 serves as the catalytic Schiff-base intermediate with substrate; via pyruvic acid. Ser-25 is subject to Pyruvic acid (Ser). Thr-57 contacts substrate. The active-site Proton donor is the Tyr-58. 73-75 contributes to the substrate binding site; it reads GAA.

This sequence belongs to the PanD family. In terms of assembly, heterooctamer of four alpha and four beta subunits. Requires pyruvate as cofactor. Is synthesized initially as an inactive proenzyme, which is activated by self-cleavage at a specific serine bond to produce a beta-subunit with a hydroxyl group at its C-terminus and an alpha-subunit with a pyruvoyl group at its N-terminus.

It is found in the cytoplasm. The catalysed reaction is L-aspartate + H(+) = beta-alanine + CO2. It participates in cofactor biosynthesis; (R)-pantothenate biosynthesis; beta-alanine from L-aspartate: step 1/1. In terms of biological role, catalyzes the pyruvoyl-dependent decarboxylation of aspartate to produce beta-alanine. This is Aspartate 1-decarboxylase from Alkalilimnicola ehrlichii (strain ATCC BAA-1101 / DSM 17681 / MLHE-1).